Consider the following 149-residue polypeptide: UPF0178 protein SE_0451 (149 aa).

This sequence belongs to the UPF0178 family.

In Staphylococcus epidermidis (strain ATCC 12228 / FDA PCI 1200), this protein is UPF0178 protein SE_0451.